Reading from the N-terminus, the 308-residue chain is D-alanine--D-alanine ligase (308 aa).

The 196-residue stretch at 100 to 295 (KEVFVRNGLP…FDGLIGRLIE (196 aa)) folds into the ATP-grasp domain. 127–180 (PFAFPAFIKSNNGGSSLALHRVSCPGELARALDELFTRGGEAIIEPAVEGVEVT) contributes to the ATP binding site. Mg(2+) contacts are provided by Asp249, Glu262, and Asn264.

This sequence belongs to the D-alanine--D-alanine ligase family. It depends on Mg(2+) as a cofactor. Requires Mn(2+) as cofactor.

It is found in the cytoplasm. The catalysed reaction is 2 D-alanine + ATP = D-alanyl-D-alanine + ADP + phosphate + H(+). It functions in the pathway cell wall biogenesis; peptidoglycan biosynthesis. Cell wall formation. The chain is D-alanine--D-alanine ligase from Oleidesulfovibrio alaskensis (strain ATCC BAA-1058 / DSM 17464 / G20) (Desulfovibrio alaskensis).